The following is a 549-amino-acid chain: MPDAFDVSDDKQLVDQQLTRDSDSKPAAKPASKQKPPSKVPGVLAADPVPEPGAAPVQAREQGHAPQGNRKPAVLEPAYHESRVVRLARYVASWTGPVNPLPAIDVLRWATNLMQSFIDARAAAGGVPVFRMHIGLPVVVITDHASAKFFLGSPSSDLDREDFKRFGPLGVAPSLLKNAMPSLVASDATGHKVDRALTVAVMHSRFKHVDEALRQSQQIVYDDFMPGVFRHPDQYTIRDVAYKFVGQFMFKWLLNTTPPSLKALRGYPVDCIIDLQTSNWLGTLVGSALCKLKMAATHSSTLNAEGLDIVRHSRLYETYRKMAETMGYTTADLDLWLQFLVQFNGVAGIGLTLASAIAVLSEQLSTLDELRREVGDEPLRFDTVDGKFPLLDSFAYEWMRFFMGPRVIFKKAMKDLQVPTSDGNLYKVRKDELICAALPLCQRDGTVYDAPNRFNARRFLDNPSLKWQVFNFGFVEAEHNPKPVQTARFGCALYSAGVGLALFKVLIGTWIQRIDWECDQEFTFVGNDTGDHGPPNGKFSVIKPRQPKH.

The disordered stretch occupies residues 1 to 75 (MPDAFDVSDD…PQGNRKPAVL (75 aa)). Basic and acidic residues predominate over residues 8–26 (SDDKQLVDQQLTRDSDSKP). The segment covering 27 to 41 (AAKPASKQKPPSKVP) has biased composition (low complexity). C491 is a binding site for heme. A disordered region spans residues 528 to 549 (DTGDHGPPNGKFSVIKPRQPKH).

It belongs to the cytochrome P450 family. The cofactor is heme.

The protein localises to the mitochondrion. It carries out the reaction (13S)-hydroperoxy-(9Z,11E,15Z)-octadecatrienoate = plasmodiophorol A. It catalyses the reaction (13S)-hydroperoxy-(9Z,11E,15Z)-octadecatrienoate = plasmodiophorol B. It functions in the pathway lipid metabolism; oxylipin biosynthesis. In terms of biological role, cytochrome P450 hydroperoxide bicyclase involved in the metabolism of oxylipins natural products such as egregiachlorides, hybridalactone, ecklonialactones and related bicyclic oxylipins. Isomerizes the hydroperoxides into epoxyalcohols via epoxyallylic radical. Can use alpha-linolenic 13-hydroperoxide ((9Z,11E,13S,15Z)-13-hydroperoxy-9,11,15-octadecatrienoic, 13-HPOT) as preferred substrate to produce the heterobicyclic oxylipins plasmodiophorol A (6-oxabicyclo[3.1.0]hexane) and plasmodiophorol B (2-oxabicyclo[2.2.1]heptane) at the ratio 12:1 and a minor product plasmodiophorol C (cyclopentanediol) formed through the hydrolysis of plasmodiophorols A and B and, to a lower extent, active with linoleic acid 13-hydroperoxide ((9Z,11E,13S)-13-hydroperoxy-9,11-octadecadienoic, 13-HPOD), linoleic acid 9-hydroperoxide ((9S,10E,12Z)-9-hydroperoxy-10,12-octadecadienoic, 9-HPOD) and alpha-linolenic 9-hydroperoxide ((9S,10E,12Z,15Z)-9-hydroperoxy-10,12,15-octadecatrienoic, 9-HPOT). This chain is Mitochondrial hydroperoxide bicyclase CYP50918A1, found in Plasmodiophora brassicae (Clubroot disease agent).